We begin with the raw amino-acid sequence, 328 residues long: Fructose-1,6-bisphosphatase class 1 (328 aa).

Glu89, Asp110, Leu112, and Asp113 together coordinate Mg(2+). Residues Asn206, Tyr234, 252-254 (YLY), and Lys264 contribute to the substrate site. Glu270 lines the Mg(2+) pocket.

Belongs to the FBPase class 1 family. As to quaternary structure, homotetramer. Requires Mg(2+) as cofactor.

The protein resides in the cytoplasm. It catalyses the reaction beta-D-fructose 1,6-bisphosphate + H2O = beta-D-fructose 6-phosphate + phosphate. It participates in carbohydrate biosynthesis; gluconeogenesis. This is Fructose-1,6-bisphosphatase class 1 from Wigglesworthia glossinidia brevipalpis.